Consider the following 88-residue polypeptide: Small ribosomal subunit protein uS15 (88 aa).

The protein belongs to the universal ribosomal protein uS15 family. In terms of assembly, part of the 30S ribosomal subunit. Forms a bridge to the 50S subunit in the 70S ribosome, contacting the 23S rRNA.

Its function is as follows. One of the primary rRNA binding proteins, it binds directly to 16S rRNA where it helps nucleate assembly of the platform of the 30S subunit by binding and bridging several RNA helices of the 16S rRNA. In terms of biological role, forms an intersubunit bridge (bridge B4) with the 23S rRNA of the 50S subunit in the ribosome. This Hydrogenovibrio crunogenus (strain DSM 25203 / XCL-2) (Thiomicrospira crunogena) protein is Small ribosomal subunit protein uS15.